A 170-amino-acid polypeptide reads, in one-letter code: Small ribosomal subunit protein bS18c (170 aa).

Disordered stretches follow at residues 1–60 and 149–170; these read MYTS…GPGD and NRNL…SSDC. 7 consecutive repeats follow at residues 4 to 10, 11 to 17, 18 to 24, 25 to 31, 32 to 38, 39 to 45, and 46 to 52; these read SKQPFLK, SKQPFSK, SEQPFSK, SEQPFRK, SKQTFRK, FKQPFRK, and SKQPFRR. A 7 X 7 AA tandem repeats region spans residues 4–52; that stretch reads SKQPFLKSKQPFSKSEQPFSKSEQPFRKSKQTFRKFKQPFRKSKQPFRR. Positions 13 to 26 are enriched in polar residues; the sequence is QPFSKSEQPFSKSE. The span at 30 to 55 shows a compositional bias: basic residues; the sequence is RKSKQTFRKFKQPFRKSKQPFRRRPR.

This sequence belongs to the bacterial ribosomal protein bS18 family. Part of the 30S ribosomal subunit.

Its subcellular location is the plastid. The protein localises to the chloroplast. In Secale cereale (Rye), this protein is Small ribosomal subunit protein bS18c (rps18).